The primary structure comprises 159 residues: Protransforming growth factor alpha (159 aa).

The N-terminal stretch at 1–23 (MVPAAGQLALLALGILVAVCQAL) is a signal peptide. A propeptide spans 24–38 (ENSTSPLSDSPVAAA) (removed in mature form). Topologically, residues 24-97 (ENSTSPLSDS…AVVAASQKKQ (74 aa)) are extracellular. A glycan (N-linked (GlcNAc...) asparagine) is linked at Asn25. The EGF-like domain occupies 42–82 (HFNKCPDSHTQYCFHGTCRFLVQEEKPACVCHSGYVGVRCE). 3 disulfides stabilise this stretch: Cys46–Cys59, Cys54–Cys70, and Cys72–Cys81. Positions 89-159 (VVAASQKKQA…TACCHSETVV (71 aa)) are cleaved as a propeptide — removed in mature form. Residues 98–123 (AITALVVVSIVALAVLIITCVLIHCC) form a helical membrane-spanning segment. The Cytoplasmic segment spans residues 124-159 (QVRKHCEWCRALVCRHEKPSALLKGRTACCHSETVV). Residues Cys152 and Cys153 are each lipidated (S-palmitoyl cysteine).

In terms of assembly, interacts with the PDZ domains of MAGI3, SDCBP and SNTA1. The interaction with SDCBP, is required for the targeting to the cell surface. In the endoplasmic reticulum, in its immature form (i.e. with a prosegment and lacking full N-glycosylation), interacts with CNIH. In the Golgi apparatus, may form a complex with CNIH and GORASP2. Interacts (via cytoplasmic C-terminal domain) with NKD2.

It localises to the secreted. Its subcellular location is the extracellular space. The protein localises to the cell membrane. In terms of biological role, TGF alpha is a mitogenic polypeptide that is able to bind to the EGF receptor/EGFR and to act synergistically with TGF beta to promote anchorage-independent cell proliferation in soft agar. This chain is Protransforming growth factor alpha (Tgfa), found in Rattus norvegicus (Rat).